Here is a 183-residue protein sequence, read N- to C-terminus: Protein jagunal homolog 1 (183 aa).

Residues 1–39 are Cytoplasmic-facing; that stretch reads MASRAGPRAAGTDGSDFQHRERVAMHYQMSVTLKYEIKK. At S3 the chain carries Phosphoserine. A helical transmembrane segment spans residues 40–60; that stretch reads LIYVHLVIWLLLVAKMSVGHL. Over 61 to 71 the chain is Lumenal; sequence RLLSHDQVAMP. Residues 72 to 92 traverse the membrane as a helical segment; that stretch reads YQWEYPYLLSIVPSVLGLLSF. At 93-96 the chain is on the cytoplasmic side; sequence PRNN. Residues 97-117 form a helical membrane-spanning segment; sequence ISYLVLSMISMGLFSIAPLIY. The Lumenal portion of the chain corresponds to 118–137; the sequence is GSMEMFPAAQQLYRHGKAYR. The chain crosses the membrane as a helical span at residues 138 to 158; that stretch reads FLFGFSAVSVMYLVLVLAVQV. Topologically, residues 159 to 183 are cytoplasmic; that stretch reads HAWQLYYSKKLLDSWFTSTQEKKRK.

This sequence belongs to the jagunal family. As to quaternary structure, interacts with COPA, COPB2 and COPG2.

The protein resides in the endoplasmic reticulum membrane. Its function is as follows. Endoplasmic reticulum transmembrane protein involved in vesicle-mediated transport, which is required for neutrophil function. Required for vesicle-mediated transport; it is however unclear whether it is involved in early secretory pathway or intracellular protein transport. Acts as a regulator of neutrophil function, probably via its role in vesicle-mediated transport: required for defense against fungal pathogens and for granulocyte colony-stimulating factor (GM-CSF) signaling pathway; possibly by regulating glycosylation and/or targeting of proteins contributing to the viability and migration of neutrophils. The protein is Protein jagunal homolog 1 of Mus musculus (Mouse).